Consider the following 496-residue polypeptide: UDP-N-acetylmuramate--L-alanine ligase (496 aa).

122-128 is an ATP binding site; the sequence is GTHGKTT.

This sequence belongs to the MurCDEF family.

The protein localises to the cytoplasm. The catalysed reaction is UDP-N-acetyl-alpha-D-muramate + L-alanine + ATP = UDP-N-acetyl-alpha-D-muramoyl-L-alanine + ADP + phosphate + H(+). It functions in the pathway cell wall biogenesis; peptidoglycan biosynthesis. Its function is as follows. Cell wall formation. This is UDP-N-acetylmuramate--L-alanine ligase from Mycobacterium avium (strain 104).